The following is a 267-amino-acid chain: Exosome complex component Rrp42 (267 aa).

The protein belongs to the RNase PH family. Rrp42 subfamily. As to quaternary structure, component of the archaeal exosome complex. Forms a hexameric ring-like arrangement composed of 3 Rrp41-Rrp42 heterodimers. The hexameric ring associates with a trimer of Rrp4 and/or Csl4 subunits.

It is found in the cytoplasm. Its function is as follows. Non-catalytic component of the exosome, which is a complex involved in RNA degradation. Contributes to the structuring of the Rrp41 active site. This chain is Exosome complex component Rrp42, found in Methanopyrus kandleri (strain AV19 / DSM 6324 / JCM 9639 / NBRC 100938).